The chain runs to 466 residues: Oxysterol-binding protein 4 (466 aa).

The span at 1–12 shows a compositional bias: polar residues; sequence MEIGTSSTTNNI. Residues 1-67 are disordered; the sequence is MEIGTSSTTN…STSPPSPPIE (67 aa). Low complexity predominate over residues 24–45; that stretch reads NNNNHNNNSSNNSSNNNSISSS. Residues 46–60 are compositionally biased toward polar residues; that stretch reads PTDSSQLMNGEQSTS.

This sequence belongs to the OSBP family.

The polypeptide is Oxysterol-binding protein 4 (osbD) (Dictyostelium discoideum (Social amoeba)).